The primary structure comprises 578 residues: MTAAALAEIAAFFGLLTAAAVPLGAYAARVLSTAPPHGRGPVARLERGLYRLAGVDPAEQMGWRRYAAAALTFNAAGLLAVFALERLQAALPGNPAGLPAVSPLVAWNTAVSFATNTNWQAYGGESTMSHLTQMGALTVQNFLSAATGISVLAALVRALAGPAGSGLGSFWVDLTRVTLRLLLPLAAALALLLAWQGVPQTSSAAARWPTLSATAASPGAEQVVALGPVASQVAVKQLGTNGGGYFNANSAHPYENPTPLSNLLEALSILLVPAALCFAFGALVKDRRQGWTVYSAMLAILVPLTVATVSAEQRGNPALAALGVDASPSALQPGGNMEGKEARLGPVDSAIWAAATTAASNGSVNAAHDSFTALGGLWPLWLMQLGEVVFGGVGSGLYGMLLFAILAVFLAGLMVGRTPEYLGKKVEAYEVKMASLAILAPSATVLLGTAAACLLPAGYGAVGNPGPHGFTELLYALSSTANNNGSAFGGLAASTPFWTLLTGVAMLVGRYWVMLPVLAIAGAFARKRPVPAGPGTLPTHGPLFAGLLVATVLLVGALTFLPALALGPVIEHLQAVPR.

Transmembrane regions (helical) follow at residues alanine 3–leucine 23, alanine 67–leucine 87, proline 95–threonine 115, alanine 136–valine 156, leucine 181–threonine 201, leucine 264–valine 284, tryptophan 291–alanine 311, glycine 396–glycine 416, leucine 436–proline 456, valine 504–phenylalanine 524, and leucine 543–alanine 563.

It belongs to the KdpA family. The system is composed of three essential subunits: KdpA, KdpB and KdpC.

Its subcellular location is the cell inner membrane. Its function is as follows. Part of the high-affinity ATP-driven potassium transport (or Kdp) system, which catalyzes the hydrolysis of ATP coupled with the electrogenic transport of potassium into the cytoplasm. This subunit binds the periplasmic potassium ions and delivers the ions to the membrane domain of KdpB through an intramembrane tunnel. In Anaeromyxobacter dehalogenans (strain 2CP-C), this protein is Potassium-transporting ATPase potassium-binding subunit.